Here is a 116-residue protein sequence, read N- to C-terminus: MRVKGGTVTRARRKKWIKLAKGYFGHKSIGYKVAKQAVVKSWTYAFRDRKQVKRDYRKLWISRISAAVRLEGLSYSKFINGLKKSNITINRKMLSELAINEPQVFSQLIAIARDSE.

Belongs to the bacterial ribosomal protein bL20 family.

Binds directly to 23S ribosomal RNA and is necessary for the in vitro assembly process of the 50S ribosomal subunit. It is not involved in the protein synthesizing functions of that subunit. In Mycoplasmopsis agalactiae (strain NCTC 10123 / CIP 59.7 / PG2) (Mycoplasma agalactiae), this protein is Large ribosomal subunit protein bL20.